The sequence spans 324 residues: Glyoxylate/hydroxypyruvate reductase B (324 aa).

Active-site residues include R237 and E266. The active-site Proton donor is the H285.

It belongs to the D-isomer specific 2-hydroxyacid dehydrogenase family. GhrB subfamily. In terms of assembly, homodimer.

It localises to the cytoplasm. It catalyses the reaction glycolate + NADP(+) = glyoxylate + NADPH + H(+). It carries out the reaction (R)-glycerate + NAD(+) = 3-hydroxypyruvate + NADH + H(+). The enzyme catalyses (R)-glycerate + NADP(+) = 3-hydroxypyruvate + NADPH + H(+). In terms of biological role, catalyzes the NADPH-dependent reduction of glyoxylate and hydroxypyruvate into glycolate and glycerate, respectively. The polypeptide is Glyoxylate/hydroxypyruvate reductase B (Shigella boydii serotype 18 (strain CDC 3083-94 / BS512)).